The following is a 485-amino-acid chain: Cysteine protease atg4da (485 aa).

Positions 22–46 (ASASSKRHLGHGAVPDGIREGSGEP) are disordered. Residue cysteine 131 is the Nucleophile of the active site. Active-site residues include aspartate 368 and histidine 370.

Belongs to the peptidase C54 family.

It is found in the cytoplasm. It catalyses the reaction [protein]-C-terminal L-amino acid-glycyl-phosphatidylethanolamide + H2O = [protein]-C-terminal L-amino acid-glycine + a 1,2-diacyl-sn-glycero-3-phosphoethanolamine. The catalysed reaction is [protein]-C-terminal L-amino acid-glycyl-phosphatidylserine + H2O = [protein]-C-terminal L-amino acid-glycine + a 1,2-diacyl-sn-glycero-3-phospho-L-serine. Cysteine protease that plays a key role in autophagy by mediating both proteolytic activation and delipidation of ATG8 family proteins. The protease activity is required for proteolytic activation of ATG8 family proteins to reveal a C-terminal glycine. Exposure of the glycine at the C-terminus is essential for ATG8 proteins conjugation to phosphatidylethanolamine (PE) and insertion to membranes, which is necessary for autophagy. In addition to the protease activity, also mediates delipidation of ATG8 family proteins. Catalyzes delipidation of PE-conjugated forms of ATG8 proteins during macroautophagy. Also involved in non-canonical autophagy, a parallel pathway involving conjugation of ATG8 proteins to single membranes at endolysosomal compartments, by catalyzing delipidation of ATG8 proteins conjugated to phosphatidylserine (PS). ATG4D plays a role in the autophagy-mediated neuronal homeostasis in the central nervous system. The polypeptide is Cysteine protease atg4da (Danio rerio (Zebrafish)).